Here is a 31-residue protein sequence, read N- to C-terminus: Cliotide T17 (31 aa).

The cyclopeptide (Gly-Asn) cross-link spans 1 to 31 (GTVPCGESCVFIPCITGIAGCSCKNKVCYLN). Intrachain disulfides connect Cys5–Cys21, Cys9–Cys23, and Cys14–Cys28.

In terms of processing, contains 3 disulfide bonds. This is a cyclic peptide. Expressed in root nodules but not in seed.

Probably participates in a plant defense mechanism. The protein is Cliotide T17 of Clitoria ternatea (Butterfly pea).